Consider the following 520-residue polypeptide: Mitogen-activated protein kinase kinase 3 (520 aa).

Ser69 bears the Phosphoserine mark. The 257-residue stretch at 83–339 folds into the Protein kinase domain; the sequence is MRVFGAIGSG…ADQLLSHPFI (257 aa). Residues 89–97 and Lys112 contribute to the ATP site; that span reads IGSGASSVV. Asp207 serves as the catalytic Proton acceptor. Ser235 bears the Phosphoserine mark. 2 positions are modified to phosphothreonine: Thr241 and Thr245. In terms of domain architecture, NTF2 spans 366–516; sequence LADMLTIHYY…YFLAKQELYI (151 aa).

This sequence belongs to the protein kinase superfamily. STE Ser/Thr protein kinase family. MAP kinase kinase subfamily. Interacts with MPK1, MPK2 and MPK7. Interacts with P.syringae type III effector HopF2. Interacts with MPK14. Binds to MAPKKK17 and MAPKKK18. Binds to MAPKKK20. Post-translationally, phosphorylation at Ser-235 and Thr-241 by MAP kinase kinase kinases positively regulates kinase activity. Phosphorylated by MAPKKK20. As to expression, mostly expressed in leaves, and, to a lower extent, in roots, seedlings, flower buds, flowers and siliques.

The protein localises to the nucleus. Its subcellular location is the cytoplasm. The catalysed reaction is L-seryl-[protein] + ATP = O-phospho-L-seryl-[protein] + ADP + H(+). It carries out the reaction L-threonyl-[protein] + ATP = O-phospho-L-threonyl-[protein] + ADP + H(+). It catalyses the reaction L-tyrosyl-[protein] + ATP = O-phospho-L-tyrosyl-[protein] + ADP + H(+). Its function is as follows. MKK3-MPK6 module plays an important role in the jasmonate signal transduction pathway through the negative regulation of MYC2/JIN1 expression. Activates by phosphorylation the downstream MPK6, MPK7 and MPK8. MKK3-MPK7 module acts as a positive regulator of PR1 gene expression. MKK3-MPK8 module negatively regulates ROS accumulation through controlling expression of the RBOHD gene. Component of the abscisic acid (ABA) signaling pathway that may act as ABA signal transducer in the context of abiotic stresses. Activator of the C group MAP kinases. Activates MPK7 in response to ABA. Mitogen-activated protein kinase (MAPK) that is specifically regulated by MAPKKK20 and mediates signaling that regulates cortical microtubule functions. This chain is Mitogen-activated protein kinase kinase 3, found in Arabidopsis thaliana (Mouse-ear cress).